The sequence spans 320 residues: Ribonuclease Z (320 aa).

Zn(2+)-binding residues include His-63, His-65, Asp-67, His-68, His-141, Asp-212, and His-270. The active-site Proton acceptor is the Asp-67.

Belongs to the RNase Z family. As to quaternary structure, homodimer. Zn(2+) serves as cofactor.

It catalyses the reaction Endonucleolytic cleavage of RNA, removing extra 3' nucleotides from tRNA precursor, generating 3' termini of tRNAs. A 3'-hydroxy group is left at the tRNA terminus and a 5'-phosphoryl group is left at the trailer molecule.. Functionally, zinc phosphodiesterase, which displays some tRNA 3'-processing endonuclease activity. Probably involved in tRNA maturation, by removing a 3'-trailer from precursor tRNA. This chain is Ribonuclease Z, found in Lacticaseibacillus casei (strain BL23) (Lactobacillus casei).